The primary structure comprises 525 residues: MTENIHKHRILILDFGSQYTQLVARRVRELGVYCELWAWDVTEAQIRDFNPSGIILSGGPESTTEENSPRAPQYVFEAGVPVFGVCYGMQTMAMQLGGHVEASNEREFGYAQVEVVNDSALVRGIEDALTADGKPLLDVWMSHGDKVTAIPSDFVTVASTESCPFAIMANEEKRFYGVQFHPEVTHTRQGMRMLERFVRDICQCEALWTPAKIIDDAVARIREQVGDDKVILGLSGGVDSSVTAMLLHRAIGKNLTCVFVDNGLLRLNEAEQVLDMFGDHFGLNIVHVPAEDRFLSALAGENDPEAKRKIIGRVFVEVFDEEALKLEDVKWLAQGTIYPDVIESAASATGKAHVIKSHHNVGGLPKEMKMGLVEPLKELFKDEVRKIGLELGLPYDMLYRHPFPGPGLGVRVLGEVKKEYCDLLRRADAIFIEELRKADLYDKVSQAFTVFLPVRSVGVMGDGRKYDWVVSLRAVETIDFMTAHWAHLPYDFLGRVSNRIINEVNGISRVVYDISGKPPATIEWE.

The Glutamine amidotransferase type-1 domain maps to 9–207 (RILILDFGSQ…VRDICQCEAL (199 aa)). The active-site Nucleophile is Cys-86. Active-site residues include His-181 and Glu-183. The GMPS ATP-PPase domain maps to 208-400 (WTPAKIIDDA…LGLPYDMLYR (193 aa)). ATP is bound at residue 235-241 (SGGVDSS).

As to quaternary structure, homodimer.

The catalysed reaction is XMP + L-glutamine + ATP + H2O = GMP + L-glutamate + AMP + diphosphate + 2 H(+). It functions in the pathway purine metabolism; GMP biosynthesis; GMP from XMP (L-Gln route): step 1/1. Functionally, catalyzes the synthesis of GMP from XMP. The protein is GMP synthase [glutamine-hydrolyzing] of Escherichia coli O8 (strain IAI1).